Consider the following 94-residue polypeptide: MLKPLGDRVVIEVIETEEKTASGIVLPDTAKEKPQEGRVVAVGKGRVLDSGECVAPEVEVGDRIIFSKYAGTEVKYDGKEYLILRESDILAVIG.

The protein belongs to the GroES chaperonin family. As to quaternary structure, heptamer of 7 subunits arranged in a ring. Interacts with the chaperonin GroEL.

The protein localises to the cytoplasm. Together with the chaperonin GroEL, plays an essential role in assisting protein folding. The GroEL-GroES system forms a nano-cage that allows encapsulation of the non-native substrate proteins and provides a physical environment optimized to promote and accelerate protein folding. GroES binds to the apical surface of the GroEL ring, thereby capping the opening of the GroEL channel. This Geobacillus sp. (strain WCH70) protein is Co-chaperonin GroES.